The following is a 61-amino-acid chain: Bactericidin B-5P (61 aa).

The signal sequence occupies residues 1–22; sequence MNFSRVLFFVFACLSAFAMASA. Residues 23–24 constitute a propeptide, removed by a dipeptidylpeptidase; sequence AP. The residue at position 60 (Gly-60) is a Glycine amide.

It belongs to the cecropin family.

Its subcellular location is the secreted. Cecropins have lytic and antibacterial activity against several Gram-positive and Gram-negative bacteria. The protein is Bactericidin B-5P of Manduca sexta (Tobacco hawkmoth).